A 220-amino-acid chain; its full sequence is Deoxyribose-phosphate aldolase (220 aa).

Catalysis depends on aspartate 89, which acts as the Proton donor/acceptor. The active-site Schiff-base intermediate with acetaldehyde is lysine 150. Lysine 182 (proton donor/acceptor) is an active-site residue.

The protein belongs to the DeoC/FbaB aldolase family. DeoC type 1 subfamily.

It is found in the cytoplasm. The catalysed reaction is 2-deoxy-D-ribose 5-phosphate = D-glyceraldehyde 3-phosphate + acetaldehyde. The protein operates within carbohydrate degradation; 2-deoxy-D-ribose 1-phosphate degradation; D-glyceraldehyde 3-phosphate and acetaldehyde from 2-deoxy-alpha-D-ribose 1-phosphate: step 2/2. Functionally, catalyzes a reversible aldol reaction between acetaldehyde and D-glyceraldehyde 3-phosphate to generate 2-deoxy-D-ribose 5-phosphate. The sequence is that of Deoxyribose-phosphate aldolase from Mycoplasmoides pirum (Mycoplasma pirum).